Here is a 286-residue protein sequence, read N- to C-terminus: D-tagatose-1,6-bisphosphate aldolase subunit KbaY (286 aa).

The active-site Proton donor is aspartate 82. Zn(2+)-binding residues include histidine 83 and histidine 180. Residue glycine 181 coordinates dihydroxyacetone phosphate. Histidine 208 contributes to the Zn(2+) binding site. Residues glycine 209 to serine 211 and asparagine 230 to threonine 233 contribute to the dihydroxyacetone phosphate site.

This sequence belongs to the class II fructose-bisphosphate aldolase family. TagBP aldolase KbaY subfamily. As to quaternary structure, homotetramer. Forms a complex with KbaZ. Zn(2+) is required as a cofactor.

The catalysed reaction is D-tagatofuranose 1,6-bisphosphate = D-glyceraldehyde 3-phosphate + dihydroxyacetone phosphate. It participates in carbohydrate metabolism; D-tagatose 6-phosphate degradation; D-glyceraldehyde 3-phosphate and glycerone phosphate from D-tagatose 6-phosphate: step 2/2. Functionally, catalytic subunit of the tagatose-1,6-bisphosphate aldolase KbaYZ, which catalyzes the reversible aldol condensation of dihydroxyacetone phosphate (DHAP or glycerone-phosphate) with glyceraldehyde 3-phosphate (G3P) to produce tagatose 1,6-bisphosphate (TBP). Requires KbaZ subunit for full activity and stability. In Escherichia coli O7:K1 (strain IAI39 / ExPEC), this protein is D-tagatose-1,6-bisphosphate aldolase subunit KbaY.